The sequence spans 160 residues: SsrA-binding protein (160 aa).

It belongs to the SmpB family.

The protein localises to the cytoplasm. Its function is as follows. Required for rescue of stalled ribosomes mediated by trans-translation. Binds to transfer-messenger RNA (tmRNA), required for stable association of tmRNA with ribosomes. tmRNA and SmpB together mimic tRNA shape, replacing the anticodon stem-loop with SmpB. tmRNA is encoded by the ssrA gene; the 2 termini fold to resemble tRNA(Ala) and it encodes a 'tag peptide', a short internal open reading frame. During trans-translation Ala-aminoacylated tmRNA acts like a tRNA, entering the A-site of stalled ribosomes, displacing the stalled mRNA. The ribosome then switches to translate the ORF on the tmRNA; the nascent peptide is terminated with the 'tag peptide' encoded by the tmRNA and targeted for degradation. The ribosome is freed to recommence translation, which seems to be the essential function of trans-translation. In Salmonella arizonae (strain ATCC BAA-731 / CDC346-86 / RSK2980), this protein is SsrA-binding protein.